The following is a 549-amino-acid chain: Peptide transport periplasmic protein SapA (549 aa).

A signal peptide spans 1 to 21 (MRLVLSSLIVIAGLLSSQATA).

It belongs to the bacterial solute-binding protein 5 family.

It localises to the periplasm. Involved in a peptide intake transport system that plays a role in the resistance to antimicrobial peptides. The protein is Peptide transport periplasmic protein SapA of Salmonella typhimurium (strain LT2 / SGSC1412 / ATCC 700720).